The following is a 454-amino-acid chain: Chromosomal replication initiator protein DnaA (454 aa).

The interval 1 to 74 (MFDLDKFWQF…IQEAYAYADM (74 aa)) is domain I, interacts with DnaA modulators. The tract at residues 74–116 (MEIQPKFEVAGKEGPERLVTPQPRIKTNQEILENRRDEFAQDL) is domain II. The segment at 117–333 (QLNSKYTFDT…GALVKVQAHA (217 aa)) is domain III, AAA+ region. G161, G163, K164, and T165 together coordinate ATP. Positions 334-454 (TIEREDINVD…VYDLKAMLEH (121 aa)) are domain IV, binds dsDNA.

Belongs to the DnaA family. Oligomerizes as a right-handed, spiral filament on DNA at oriC.

Its subcellular location is the cytoplasm. In terms of biological role, plays an essential role in the initiation and regulation of chromosomal replication. ATP-DnaA binds to the origin of replication (oriC) to initiate formation of the DNA replication initiation complex once per cell cycle. Binds the DnaA box (a 9 base pair repeat at the origin) and separates the double-stranded (ds)DNA. Forms a right-handed helical filament on oriC DNA; dsDNA binds to the exterior of the filament while single-stranded (ss)DNA is stabiized in the filament's interior. The ATP-DnaA-oriC complex binds and stabilizes one strand of the AT-rich DNA unwinding element (DUE), permitting loading of DNA polymerase. After initiation quickly degrades to an ADP-DnaA complex that is not apt for DNA replication. Binds acidic phospholipids. In Lactobacillus johnsonii (strain CNCM I-12250 / La1 / NCC 533), this protein is Chromosomal replication initiator protein DnaA.